The primary structure comprises 223 residues: Proteinase inhibitor type-2 TR8 (223 aa).

An N-terminal signal peptide occupies residues 1 to 24 (MAIYKVALLLLFGMILLASDFEHA). Tandem repeats lie at residues 24–81 (AKAC…EWVS), 88–145 (KKAC…EWVS), and 152–209 (EKDC…EWVS). Cystine bridges form between cysteine 27–cysteine 120, cysteine 31–cysteine 116, cysteine 40–cysteine 126, cysteine 52–cysteine 95, cysteine 55–cysteine 73, cysteine 56–cysteine 91, cysteine 62–cysteine 104, and cysteine 119–cysteine 137.

Belongs to the protease inhibitor I20 (potato type II proteinase inhibitor) family.

This chain is Proteinase inhibitor type-2 TR8 (ARPI), found in Solanum lycopersicum (Tomato).